Reading from the N-terminus, the 618-residue chain is MPVRQLPEQIINRIAAGEVVERPASVVKELVENAIDAGASRIDIFTDGGGRRKIAITDDGGGMTAADLALAVERHATSKLDDEDLLQIRTLGFRGEALPSIGSVARLSITTRHKSEPHAWALQVDCGEKSPVVPAALNQGTRVEVADLFHATPARLKFLKTDRTEAEAIREVVRRLAMARPDIAFTIAGEERAPVTWAAALPGAPGQLTRLGDILGADFRSHAIAVQSARESVAVEGFAAAPALTRANALGQYLFVNGRPVRDKLILGAVRAAYADYLPRDRHPVVALFVTLDPREVDANVHPAKTEVRFRNAGLVRALIIHALKEGLAREGRRTAANDGGATIAAFRPAFAPPRPNPGPMNWDWQRSPSAPAAPVPRDHGADAMPAAAAFSPAAFAEPAQAAFDVGGPRADLRLHEQPAAPDLLDRPLGAARTQLHDTYIVAQTRDGLVIVDQHAAHERIVYERLKASLSAHGVQRQILLIPDIVELDEAIVEALLARTDELASFGLAIESFGPGAVAVRETPSLLGKINAAGLLRDLAEHMEEWGEALPLERRLMHVAATMACHGSVRAGRRLKPEEMNALLREMEETPNSGQCNHGRPTYVELKLADVEKLFGRR.

It belongs to the DNA mismatch repair MutL/HexB family.

This protein is involved in the repair of mismatches in DNA. It is required for dam-dependent methyl-directed DNA mismatch repair. May act as a 'molecular matchmaker', a protein that promotes the formation of a stable complex between two or more DNA-binding proteins in an ATP-dependent manner without itself being part of a final effector complex. The protein is DNA mismatch repair protein MutL of Bradyrhizobium sp. (strain BTAi1 / ATCC BAA-1182).